A 421-amino-acid chain; its full sequence is Ubiquitin-like modifier-activating enzyme 5 (421 aa).

Gly89, Asp110, Lys133, Asn156, and Asn191 together coordinate ATP. Residues Cys233 and Cys236 each coordinate Zn(2+). The active-site Glycyl thioester intermediate is the Cys257. 2 residues coordinate Zn(2+): Cys310 and Cys315.

The protein belongs to the ubiquitin-activating E1 family. UBA5 subfamily.

E1-like enzyme which activates UFM1. This is Ubiquitin-like modifier-activating enzyme 5 from Oryza sativa subsp. japonica (Rice).